The following is a 240-amino-acid chain: MAENGIKHQEVGHKSLLQSDALYQYILETSVYPREPESMKELREVTAKHPWNLMTTSADEGQFLNMLLKLINAKNTMEIGVYTGYSLLATALAIPDDGKILAMDINRENYEIGLPIIEKAGVAHKIEFREGPALPVLDQLVEDKKNHGTYDFIFVDADKDNYINYHKRIIDLVKVGGLIGYDNTLWNGSVVAPPDAPMRKYVRYYRDFVLELNKALAADPRIEICMLPVGDGITLCRRIT.

A substrate-binding site is contributed by lysine 14. S-adenosyl-L-methionine is bound by residues threonine 56, glutamate 78, 80-81 (GV), serine 86, aspartate 104, and alanine 133. Aspartate 156 contributes to the substrate binding site. Aspartate 156 contacts a divalent metal cation. An S-adenosyl-L-methionine-binding site is contributed by aspartate 158. A divalent metal cation is bound by residues aspartate 182 and asparagine 183. Asparagine 187 serves as a coordination point for substrate.

The protein belongs to the class I-like SAM-binding methyltransferase superfamily. Cation-dependent O-methyltransferase family. CCoAMT subfamily. Requires Mg(2+) as cofactor. Expression steadily increases from the bottom to the top of the plant.

It catalyses the reaction (E)-caffeoyl-CoA + S-adenosyl-L-methionine = (E)-feruloyl-CoA + S-adenosyl-L-homocysteine + H(+). It participates in aromatic compound metabolism; phenylpropanoid biosynthesis. Methylates caffeoyl-CoA to feruloyl-CoA and 5-hydroxyferuloyl-CoA to sinapoyl-CoA. Plays a role in the synthesis of feruloylated polysaccharides. Involved in the reinforcement of the plant cell wall. Also involved in the responding to wounding or pathogen challenge by the increased formation of cell wall-bound ferulic acid polymers. Methylates 5-hydroxyferulolyl-CoA more efficiently than caffeoyl-CoA. The chain is Caffeoyl-CoA O-methyltransferase 5 (CCOAOMT5) from Nicotiana tabacum (Common tobacco).